A 360-amino-acid polypeptide reads, in one-letter code: Cannabinoid receptor 2 (360 aa).

Residues 1–33 (MAGCRELELTNGSNGGLEFNPMKEYMILSDAQQ) are Extracellular-facing. N-linked (GlcNAc...) asparagine glycosylation is present at asparagine 11. A helical transmembrane segment spans residues 34–59 (IAVAVLCTLMGLLSALENVAVLYLIL). At 60 to 71 (SSQRLRRKPSYL) the chain is on the cytoplasmic side. Residues 72-92 (FIGSLAGADFLASVIFACNFV) traverse the membrane as a helical segment. Topologically, residues 93–104 (IFHVFHGVDSRN) are extracellular. The chain crosses the membrane as a helical span at residues 105–129 (IFLLKIGSVTMTFTASVGSLLLTAV). Residues 130–149 (DRYLCLCYPPTYKALVTRGR) lie on the Cytoplasmic side of the membrane. A helical transmembrane segment spans residues 150-172 (ALVALGVMWVLSALISYLPLMGW). Topologically, residues 173–188 (TCCPSPCSELFPLIPN) are extracellular. Residues 189–214 (DYLLGWLLFIAILFSGIIYTYGYVLW) traverse the membrane as a helical segment. Residues 215–246 (KAHQHVASLAEHQDRQVPGIARMRLDVRLAKT) lie on the Cytoplasmic side of the membrane. Residues 247 to 267 (LGLVMAVLLICWFPALALMGH) traverse the membrane as a helical segment. The Extracellular segment spans residues 268 to 279 (SLVTTLSDKVKE). A helical transmembrane segment spans residues 280–301 (AFAFCSMLCLVNSMINPIIYAL). The Cytoplasmic segment spans residues 302–360 (RSGEIRSAAQHCLTGWKKYLQGLGSEGKEEAPKSSVTETEAEVKTTTGPGSRTPGCSNC). Positions 327–360 (EGKEEAPKSSVTETEAEVKTTTGPGSRTPGCSNC) are disordered. A phosphoserine mark is found at serine 335 and serine 336. Threonine 338 is modified (phosphothreonine). The segment covering 349–360 (GPGSRTPGCSNC) has biased composition (polar residues). Serine 352 carries the post-translational modification Phosphoserine.

The protein belongs to the G-protein coupled receptor 1 family. In terms of processing, constitutively phosphorylated on Ser-352; phosphorylation increases cell internalization and desensitizes the receptor. Expressed in spleen and brain by neurons and glial cells (at protein level). Expressed in lung, testis and thymus but not in heart, liver or kidney. Expressed in cerebellum, cortex and brainstem.

It localises to the cell membrane. The protein localises to the cell projection. The protein resides in the dendrite. It is found in the perikaryon. Functionally, heterotrimeric G protein-coupled receptor for endocannabinoid 2-arachidonoylglycerol mediating inhibition of adenylate cyclase. May function in inflammatory response, nociceptive transmission and bone homeostasis. The chain is Cannabinoid receptor 2 (Cnr2) from Rattus norvegicus (Rat).